The following is a 128-amino-acid chain: Large ribosomal subunit protein uL18 (128 aa).

The tract at residues 1-36 (MAKRSSLTRRGVSPRAAARARRHMRVRKKVRGTPER) is disordered. Over residues 18–31 (ARARRHMRVRKKVR) the composition is skewed to basic residues.

It belongs to the universal ribosomal protein uL18 family. In terms of assembly, part of the 50S ribosomal subunit; part of the 5S rRNA/L5/L18/L25 subcomplex. Contacts the 5S and 23S rRNAs.

This is one of the proteins that bind and probably mediate the attachment of the 5S RNA into the large ribosomal subunit, where it forms part of the central protuberance. This Thermobifida fusca (strain YX) protein is Large ribosomal subunit protein uL18.